A 640-amino-acid polypeptide reads, in one-letter code: Leucine-rich repeat-containing protein 4C (640 aa).

The signal sequence occupies residues 1–44; the sequence is MLNKMTLHPQQIMIGPRFNRALFDPLLVVLLALQLLVVAGLVRA. The LRRNT domain maps to 45–76; the sequence is QTCPSVCSCSNQFSKVICVRKNLREVPDGIST. LRR repeat units lie at residues 77 to 98, 101 to 122, 125 to 146, 149 to 170, 173 to 195, 198 to 219, 220 to 241, 244 to 265, and 268 to 289; these read NTRL…SFKH, HLEI…AFNG, NLNT…AFVY, KLKE…AFNR, SLRR…AFEG, NLRY…TPLI, KLDE…SFQG, HLQK…AFDN, and SLVE…LFTP. In terms of domain architecture, LRRCT spans 301 to 353; the sequence is NPWNCNCDILWLSWWIKDMAPSNTACCARCNTPPNLKGRYIGELDQNYFTCYA. Residues 354 to 442 form the Ig-like C2-type domain; it reads PVIVEPPADL…GNTTASATLN (89 aa). A disulfide bond links Cys375 and Cys426. A disordered region spans residues 463 to 483; it reads EPSQDEARTTDNNVGPTPVVD. A helical membrane pass occupies residues 528-548; it reads IIIGCFVAITLMAAVMLVIFY. Ser631 bears the Phosphoserine mark.

Interacts with NTNG1 and WHRN. In terms of tissue distribution, highly expressed in the cerebral cortex, including frontal, parietal and occipital lobes. Putamen, amygdala, hippocampus and medulla oblongata show moderate expression. Caudate nucleus and thalamus express small amounts, whereas other brain regions show very weak or no expression.

The protein resides in the postsynaptic cell membrane. Functionally, may promote neurite outgrowth of developing thalamic neurons. This Homo sapiens (Human) protein is Leucine-rich repeat-containing protein 4C (LRRC4C).